The chain runs to 1083 residues: Solute carrier family 12 member 7 (1083 aa).

The segment at 1–55 is disordered; sequence MPTNFTVVPVEARADGAGDEAAERTEEPESPESVDQTSPTPGDGNPRENSPFINN. The Cytoplasmic segment spans residues 1-119; it reads MPTNFTVVPV…RREVKAPRMG (119 aa). Residues 12 to 27 are compositionally biased toward basic and acidic residues; it reads ARADGAGDEAAERTEE. Residues Ser-30 and Ser-33 each carry the phosphoserine modification. Thr-37 is modified (phosphothreonine). Residues Ser-50 and Ser-62 each carry the phosphoserine modification. A discontinuously helical membrane pass occupies residues 120–142; that stretch reads TFIGVYLPCLQNILGVILFLRLT. The K(+) site is built by Asn-131 and Ile-132. Val-135 provides a ligand contact to chloride. The Extracellular segment spans residues 143-149; that stretch reads WIVGAAG. A helical transmembrane segment spans residues 150–172; sequence VMESFLIVAMCCTCTMLTAISMS. The Cytoplasmic portion of the chain corresponds to 173–196; the sequence is AIATNGVVPAGGSYYMISRSLGPE. A helical transmembrane segment spans residues 197 to 225; it reads FGGAVGLCFYLGTTFAGAMYILGTIEIFL. Residues 226–249 are Extracellular-facing; sequence TYISPSAAIFQAETADGEAAALLN. The next 2 membrane-spanning stretches (helical) occupy residues 250 to 271 and 272 to 300; these read NMRV…VGVK and YVNK…KTAF. Residues 301–419 are Extracellular-facing; that stretch reads APPDIPVCLL…PYVLTDIMTY (119 aa). Residue Asn-312 is glycosylated (N-linked (GlcNAc...) (high mannose) asparagine). N-linked (GlcNAc...) (complex) asparagine glycans are attached at residues Asn-331 and Asn-344. Asn-360 carries N-linked (GlcNAc...) (high mannose) asparagine glycosylation. A helical transmembrane segment spans residues 420-440; it reads FTMLVGIYFPSVTGIMAGSNR. 2 residues coordinate K(+): Pro-429 and Thr-432. Pro-429 provides a ligand contact to chloride. Chloride contacts are provided by Gly-433 and Ile-434. The Cytoplasmic portion of the chain corresponds to 441-450; that stretch reads SGDLKDAQKS. A helical transmembrane segment spans residues 451–473; the sequence is IPTGTILAIVTTSFIYLSCIVLF. The Extracellular portion of the chain corresponds to 474 to 504; it reads GACIEGVVLRDKFGEALQGNLVIGMLAWPSP. Residues 505-531 form a helical membrane-spanning segment; the sequence is WVIVIGSFFSTCGAGLQSLTGAPRLLQ. At 532-554 the chain is on the cytoplasmic side; the sequence is AIARDGIIPFLQVFGHGKANGEP. The next 2 membrane-spanning stretches (helical) occupy residues 555–573 and 574–598; these read TWAL…LIAS and LDSV…ACAV. Residue Tyr-589 participates in chloride binding. At 599–612 the chain is on the cytoplasmic side; that stretch reads QTLLRTPNWRPRFK. The next 2 membrane-spanning stretches (helical) occupy residues 613–635 and 636–651; these read FYHW…ICSW and YYAL…IYKY. Topologically, residues 652–1083 are cytoplasmic; the sequence is IEYRGAEKEW…GGREVITIYS (432 aa). The segment at 664–680 is scissor helix; sequence GIRGLSLNAARYALLRV. Residues Thr-973 and Thr-980 each carry the phosphothreonine modification.

It belongs to the SLC12A transporter family. K/Cl co-transporter subfamily. Homodimer; adopts a domain-swap conformation at the scissor helices connecting the transmembrane domain and C-terminal domain. Heterodimer with K-Cl cotransporter SLC12A5. Glycosylation at Asn-331 and Asn-344 is required for proper trafficking to the cell surface, and augments protein stability. In terms of tissue distribution, detected in proximal tubules in the kidney, in particular in basolateral membranes of intercalated cells in the cortical collecting duct.

It is found in the cell membrane. It carries out the reaction K(+)(in) + chloride(in) = K(+)(out) + chloride(out). Activated by N-ethylmaleimide (NEM). Inhibited by furosemide, DIDS and bumetanide. The inhibition is much stronger in the presence of 50 mM K(+) in the uptake medium. Inhibited by DIOA. Inhibited by WNK3. Its function is as follows. Mediates electroneutral potassium-chloride cotransport when activated by cell swelling. May mediate K(+) uptake into Deiters' cells in the cochlea and contribute to K(+) recycling in the inner ear. Important for the survival of cochlear outer and inner hair cells and the maintenance of the organ of Corti. May be required for basolateral Cl(-) extrusion in the kidney and contribute to renal acidification. The protein is Solute carrier family 12 member 7 (Slc12a7) of Mus musculus (Mouse).